The chain runs to 637 residues: Protein RRP6-like 1 (637 aa).

The 3'-5' exonuclease domain maps to 118-283; that stretch reads VEEVKDLEDL…YIYDVMRMEL (166 aa). Residues 334–414 enclose the HRDC domain; that stretch reads NAVQLSIVAG…RRSMQNAAAF (81 aa). Acidic residues predominate over residues 553–565; it reads VDDDDDDDDDESY. Positions 553-624 are disordered; that stretch reads VDDDDDDDDD…EDMRRRSEKH (72 aa). Residues 580–598 show a composition bias toward polar residues; it reads ETPSKGSPSLTQKPKTCNT. The segment covering 602–614 has biased composition (acidic residues); the sequence is VLDDDDDSESRED.

Its subcellular location is the nucleus. It localises to the nucleoplasm. In terms of biological role, acts as an important epigenetic regulator through multiple silencing mechanisms. Involved in transcriptional gene silencing (TGS). Plays a role for DNA methylation in the RNA-directed DNA methylation (RdDM) pathway. Contributes to the methylation status of the retrotransposon SN1. Required for DNA methylation only at a subset of RdDM target loci. Plays a regulatory role in RdDM through retention of non-coding RNAs (ncRNAs) in normal cells. Helps to retain Pol V-transcribed RNAs in chromatin to enable their scaffold function and is required for genome-wide Pol IV-dependent siRNA (24 nt siRNA) production that may involve retention of Pol IV transcripts. Involved in association with RRP6L2 in the silencing of the solo LTR locus. Controls levels of ncRNAs from the solo LTR locus. Seems to function independently of the RdDM pathway. Functions redundantly with RRP6L2 in the regulation of FLC locus. Participates in the maintenance of trimethylated 'Lys-27' (H3K27me3) at FLC locus via the regulation of antisense long non-coding RNAs (lncRNAs) and the regulation of diverse antisense RNAs derived from the FLC locus. Seems not involved in the exosomal RNA degradation. Can complement the growth defect of a yeast mutant lacking RRP6 exonuclease. This is Protein RRP6-like 1 from Arabidopsis thaliana (Mouse-ear cress).